The primary structure comprises 81 residues: Photosystem I iron-sulfur center (81 aa).

4Fe-4S ferredoxin-type domains follow at residues 2–31 (AHSVKIYDTCIGCTQCVRACPTDVLEMVPW) and 39–68 (IASAPRTEDCVGCKRCESACPTDFLSVRVY). The [4Fe-4S] cluster site is built by Cys-11, Cys-14, Cys-17, Cys-21, Cys-48, Cys-51, Cys-54, and Cys-58.

In terms of assembly, the eukaryotic PSI reaction center is composed of at least 11 subunits. [4Fe-4S] cluster is required as a cofactor.

The protein localises to the plastid. It is found in the chloroplast thylakoid membrane. It catalyses the reaction reduced [plastocyanin] + hnu + oxidized [2Fe-2S]-[ferredoxin] = oxidized [plastocyanin] + reduced [2Fe-2S]-[ferredoxin]. Functionally, apoprotein for the two 4Fe-4S centers FA and FB of photosystem I (PSI); essential for photochemical activity. FB is the terminal electron acceptor of PSI, donating electrons to ferredoxin. The C-terminus interacts with PsaA/B/D and helps assemble the protein into the PSI complex. Required for binding of PsaD and PsaE to PSI. PSI is a plastocyanin-ferredoxin oxidoreductase, converting photonic excitation into a charge separation, which transfers an electron from the donor P700 chlorophyll pair to the spectroscopically characterized acceptors A0, A1, FX, FA and FB in turn. In Chlorokybus atmophyticus (Soil alga), this protein is Photosystem I iron-sulfur center.